We begin with the raw amino-acid sequence, 144 residues long: Large ribosomal subunit protein uL15 (144 aa).

The interval 1-44 (MNLNELQPAAGSRKLRNRVGRGTSSGNGKTSGRGQKGQKARGKV) is disordered. Residues 23–35 (TSSGNGKTSGRGQ) are compositionally biased toward gly residues.

Belongs to the universal ribosomal protein uL15 family. Part of the 50S ribosomal subunit.

In terms of biological role, binds to the 23S rRNA. This Leuconostoc citreum (strain KM20) protein is Large ribosomal subunit protein uL15.